Here is a 325-residue protein sequence, read N- to C-terminus: Quinone oxidoreductase (325 aa).

It belongs to the zinc-containing alcohol dehydrogenase family. Quinone oxidoreductase subfamily.

The catalysed reaction is 2 a quinone + NADPH + H(+) = 2 a 1,4-benzosemiquinone + NADP(+). The polypeptide is Quinone oxidoreductase (qor) (Pseudomonas aeruginosa (strain ATCC 15692 / DSM 22644 / CIP 104116 / JCM 14847 / LMG 12228 / 1C / PRS 101 / PAO1)).